The primary structure comprises 365 residues: TD and POZ domain-containing protein 1-like (365 aa).

One can recognise an MATH domain in the interval 19 to 149 (KFCYKWTISN…EDQLTICCKV (131 aa)). Residues 188 to 255 (TDCCLLVAGH…IYTGKAPYLH (68 aa)) form the BTB domain.

This sequence belongs to the Tdpoz family.

The polypeptide is TD and POZ domain-containing protein 1-like (Mus musculus (Mouse)).